The primary structure comprises 255 residues: Type III pantothenate kinase (255 aa).

An ATP-binding site is contributed by 6–13; the sequence is DVGNTNTV. Substrate-binding positions include Tyr100 and 107–110; that span reads GADR. The active-site Proton acceptor is Asp109. Asp129 provides a ligand contact to K(+). Thr132 is a binding site for ATP. Thr184 serves as a coordination point for substrate.

The protein belongs to the type III pantothenate kinase family. In terms of assembly, homodimer. It depends on NH4(+) as a cofactor. The cofactor is K(+).

The protein resides in the cytoplasm. The catalysed reaction is (R)-pantothenate + ATP = (R)-4'-phosphopantothenate + ADP + H(+). It functions in the pathway cofactor biosynthesis; coenzyme A biosynthesis; CoA from (R)-pantothenate: step 1/5. In terms of biological role, catalyzes the phosphorylation of pantothenate (Pan), the first step in CoA biosynthesis. This Syntrophomonas wolfei subsp. wolfei (strain DSM 2245B / Goettingen) protein is Type III pantothenate kinase.